The primary structure comprises 681 residues: Spermatogenesis-associated protein 21 (681 aa).

The segment covering 1–14 (MENRNTHTHPESKA) has biased composition (basic and acidic residues). 2 disordered regions span residues 1–284 (MENR…ANSR) and 298–336 (EEAT…VPTL). 2 stretches are compositionally biased toward polar residues: residues 83–94 (QEPSARPRTTQD) and 159–173 (PSNS…NSPS). The segment covering 251 to 261 (PEERDTEKKEL) has biased composition (basic and acidic residues). A compositionally biased stretch (polar residues) spans 264–281 (GQKQRQQALSAAGTQGPA). Positions 319 to 335 (TVTSVSTSGPISSSVPT) are enriched in low complexity. In terms of domain architecture, EF-hand spans 464–499 (FTPAQVEEALMSADVNGDGHVDFKDFLAVMTDTKRF). 5 residues coordinate Ca(2+): D477, N479, D481, H483, and D488. The interval 653 to 681 (LFFQPGQQGSREHSSDSRKWLSSMPARTH) is disordered. The segment covering 662 to 671 (SREHSSDSRK) has biased composition (basic and acidic residues).

Functionally, involved in the differentiation of haploid spermatids. The polypeptide is Spermatogenesis-associated protein 21 (Spata21) (Mus musculus (Mouse)).